Here is a 347-residue protein sequence, read N- to C-terminus: Dual specificity mitogen-activated protein kinase kinase mek-1 (347 aa).

The tract at residues 1-42 is disordered; it reads MERDFDLGMGRPGGLGGLGGEPIMQQMPQPAPHHPSRSSNDH. Gly residues predominate over residues 10-20; that stretch reads GRPGGLGGLGG. A Protein kinase domain is found at 72–325; it reads LQFVEDIGHG…YDMLLQHPFV (254 aa). Residues 78–86 and K99 each bind ATP; that span reads IGHGSCGTV. The active-site Proton acceptor is D193. Phosphoserine is present on residues S221 and S225.

It belongs to the protein kinase superfamily. STE Ser/Thr protein kinase family. MAP kinase kinase subfamily. In terms of assembly, interacts with shc-1; the interaction is independent of mek-1 catalytic activity, is constitutive and may facilitate mlk-1-mediated phosphorylation by bringing mlk-1 and mek-1 together. The cofactor is Mg(2+). May be phosphorylated at Ser-221 and/or Ser-225 by mlk-1. As to expression, expressed in pharyngeal muscles, uterine endothelial cells, intestine and in neurons of ring ganglia, ventral ganglion and ganglia around anus. Expressed also in hypodermis and body muscles.

The enzyme catalyses L-seryl-[protein] + ATP = O-phospho-L-seryl-[protein] + ADP + H(+). The catalysed reaction is L-threonyl-[protein] + ATP = O-phospho-L-threonyl-[protein] + ADP + H(+). It carries out the reaction L-tyrosyl-[protein] + ATP = O-phospho-L-tyrosyl-[protein] + ADP + H(+). May be activated by phosphorylation at Ser-221 and Ser-225. In terms of biological role, dual specificity protein kinase which may phosphorylate kgb-1 and thereby is an essential component of the JNK pathway composed of mlk-1, mek-1 and kgb-1. May also have a synergistic role with sek-1 in phosphorylating pmk-1. Involved in the response to environmental stress including heavy metal ions (Cu(2+) and Cd(2+)), oxidative stress and starvation. In association with sek-1, regulates germline cell apoptosis in response to oxidative, osmotic and heat shock stresses. Involved in resistance to pathogenic bacteria infection. Involved in axon regeneration after injury. In Caenorhabditis elegans, this protein is Dual specificity mitogen-activated protein kinase kinase mek-1.